Reading from the N-terminus, the 224-residue chain is 7-cyano-7-deazaguanine synthase 1 (224 aa).

10 to 20 (LSGGLDSMVCA) contributes to the ATP binding site. 4 residues coordinate Zn(2+): Cys-189, Cys-199, Cys-202, and Cys-205.

It belongs to the QueC family. It depends on Zn(2+) as a cofactor.

It carries out the reaction 7-carboxy-7-deazaguanine + NH4(+) + ATP = 7-cyano-7-deazaguanine + ADP + phosphate + H2O + H(+). The protein operates within purine metabolism; 7-cyano-7-deazaguanine biosynthesis. In terms of biological role, catalyzes the ATP-dependent conversion of 7-carboxy-7-deazaguanine (CDG) to 7-cyano-7-deazaguanine (preQ(0)). This Sphingopyxis alaskensis (strain DSM 13593 / LMG 18877 / RB2256) (Sphingomonas alaskensis) protein is 7-cyano-7-deazaguanine synthase 1.